A 777-amino-acid chain; its full sequence is Kelch domain-containing protein 7A (777 aa).

A helical transmembrane segment spans residues 21 to 38 (VVLSAAALLLVTVAYRLY). Residues 43-207 (APAQRWGGNG…GLGQLEPPHC (165 aa)) are disordered. A Phosphoserine modification is found at Ser86. Positions 113–127 (TDRKPQRKGSGEERG) are enriched in basic and acidic residues. Asn257 carries an N-linked (GlcNAc...) asparagine glycan. A disordered region spans residues 313–359 (LTEVPSPRPPPGSLGTGAASGGQAGDTKGAAERAASPQTGPWPSTRG). Gly residues predominate over residues 326 to 336 (LGTGAASGGQA). Kelch repeat units lie at residues 328–374 (TGAA…ENPE), 492–538 (QYLV…ICSL), 541–589 (YLFV…ALDG), 590–632 (HLYA…ATVR), and 635–677 (EIFV…AVNG). At Ser365 the chain carries Phosphoserine.

The protein localises to the membrane. The polypeptide is Kelch domain-containing protein 7A (KLHDC7A) (Homo sapiens (Human)).